A 398-amino-acid polypeptide reads, in one-letter code: MVRKVAEQNLQKNNENDRELSKNVYLLGFTSFLNDMSSEMIMPILPMLITSVGGGSLSIGLVGGLREFISNILMVLIGYCSDKVRKRKIFVVLGYLTSSMFKLLLGLSKSWLGAVIFSSLERMGKGIRTAPRDAIISESMPKTLGKGFGIQRAFDTAGAILGSTLSLLFILYLQYSFNQIILIAAVIGFLTLIPLYFVKEKPSPSNNKITFRVGIKNLPKELKLFILISAIFTLSNFSYMFYILRAQEFLMIVDEKMAIIIPIALYILYNIFYATFSIPFGILSDKIGRKSVLTIGYIVYGIVSLGFAYFISQKSLILLFALYGIAYALFAGNQKAYVSDLSSEDIRATALGLFYTVVGLTSLPASLIAGYLWKISPEMTFLYGSVLAIISGLLLLFI.

A run of 10 helical transmembrane segments spans residues 43–65 (PILPMLITSVGGGSLSIGLVGGL), 89–108 (IFVVLGYLTSSMFKLLLGLS), 156–173 (TAGAILGSTLSLLFILYL), 180–198 (IILIAAVIGFLTLIPLYFV), 224–246 (LFILISAIFTLSNFSYMFYILRA), 259–281 (IIIPIALYILYNIFYATFSIPFG), 291–311 (SVLTIGYIVYGIVSLGFAYFI), 316–338 (LILLFALYGIAYALFAGNQKAYV), 351–373 (LGLFYTVVGLTSLPASLIAGYLW), and 380–397 (TFLYGSVLAIISGLLLLF).

It belongs to the major facilitator superfamily.

It localises to the cell membrane. This is an uncharacterized protein from Methanocaldococcus jannaschii (strain ATCC 43067 / DSM 2661 / JAL-1 / JCM 10045 / NBRC 100440) (Methanococcus jannaschii).